We begin with the raw amino-acid sequence, 247 residues long: Carboxy-S-adenosyl-L-methionine synthase (247 aa).

S-adenosyl-L-methionine contacts are provided by residues Tyr39, 64–66 (GCS), 89–90 (DN), 117–118 (DI), Asn132, and Arg199.

Belongs to the class I-like SAM-binding methyltransferase superfamily. Cx-SAM synthase family. In terms of assembly, homodimer.

It catalyses the reaction prephenate + S-adenosyl-L-methionine = carboxy-S-adenosyl-L-methionine + 3-phenylpyruvate + H2O. Its function is as follows. Catalyzes the conversion of S-adenosyl-L-methionine (SAM) to carboxy-S-adenosyl-L-methionine (Cx-SAM). The sequence is that of Carboxy-S-adenosyl-L-methionine synthase from Escherichia coli O7:K1 (strain IAI39 / ExPEC).